Reading from the N-terminus, the 357-residue chain is Protein RecA (357 aa).

An ATP-binding site is contributed by 78 to 85 (GPESSGKT).

Belongs to the RecA family.

The protein localises to the cytoplasm. Functionally, can catalyze the hydrolysis of ATP in the presence of single-stranded DNA, the ATP-dependent uptake of single-stranded DNA by duplex DNA, and the ATP-dependent hybridization of homologous single-stranded DNAs. It interacts with LexA causing its activation and leading to its autocatalytic cleavage. The chain is Protein RecA from Cereibacter sphaeroides (strain ATCC 17029 / ATH 2.4.9) (Rhodobacter sphaeroides).